A 454-amino-acid polypeptide reads, in one-letter code: Probable DNA primase large subunit (454 aa).

The [4Fe-4S] cluster site is built by cysteine 280, cysteine 359, cysteine 375, and cysteine 415.

Belongs to the eukaryotic-type primase large subunit family. As to quaternary structure, heterodimer of a small subunit and a large subunit. Requires [4Fe-4S] cluster as cofactor.

DNA primase is the polymerase that synthesizes small RNA primers for the Okazaki fragments made during discontinuous DNA replication. This Arabidopsis thaliana (Mouse-ear cress) protein is Probable DNA primase large subunit.